The following is a 361-amino-acid chain: Tegument protein UL51 homolog (361 aa).

Cys-8 is lipidated: S-palmitoyl cysteine; by host. The tract at residues 251-299 is disordered; sequence GDEEDEVTVMSPSPEPVQQQPPVEPVQQQPQGRGSHRRRYKESAPQETL. Positions 266 to 281 are enriched in low complexity; it reads PVQQQPPVEPVQQQPQ.

It belongs to the herpesviridae UL51 family. In terms of assembly, oligomerizes. Interacts with UL103; this interaction mediates UL103 incorporation to virions. Post-translationally, phosphorylated. Palmitoylation is necessary for Golgi localization.

The protein resides in the virion tegument. It is found in the host cytoplasm. The protein localises to the host Golgi apparatus. Its function is as follows. Plays several roles during the time course of infection, including egress of virus particles from the perinuclear space and secondary envelopment of cytoplasmic capsids that bud into specific trans-Golgi network (TGN)-derived membranes. In Homo sapiens (Human), this protein is Tegument protein UL51 homolog (UL71).